A 132-amino-acid polypeptide reads, in one-letter code: Agouti-signaling protein (132 aa).

Residues 1-22 (MDVTRLLLATLLVFLCFFTANS) form the signal peptide. The N-linked (GlcNAc...) asparagine glycan is linked to Asn39. Residues 61-87 (QIGRKEAEKKRSSKKEASMKKVARPRT) form a disordered region. Residues 63–79 (GRKEAEKKRSSKKEASM) show a composition bias toward basic and acidic residues. Cystine bridges form between Cys93/Cys108, Cys100/Cys114, Cys107/Cys125, Cys111/Cys132, and Cys116/Cys123. The 40-residue stretch at 93–132 (CVATRNSCKPPAPACCDPCASCQCRFFRSACSCRVLSLNC) folds into the Agouti domain.

It is found in the secreted. Functionally, involved in the regulation of melanogenesis. The binding of ASP to MC1R precludes alpha-MSH initiated signaling and thus blocks production of cAMP, leading to a down-regulation of eumelanogenesis (brown/black pigment) and thus increasing synthesis of pheomelanin (yellow/red pigment). In Gorilla gorilla gorilla (Western lowland gorilla), this protein is Agouti-signaling protein (ASIP).